Reading from the N-terminus, the 271-residue chain is Insulin-like growth factor-binding protein 5 (271 aa).

A signal peptide spans 1 to 19 (MVLTAVLLLLAACAGPAQG). The region spanning 22–102 (SFVHCEPCDE…LHGRGVCLNE (81 aa)) is the IGFBP N-terminal domain. 6 disulfide bridges follow: C26–C52, C29–C54, C37–C55, C44–C58, C66–C79, and C73–C99. Basic and acidic residues predominate over residues 109 to 121 (AKIERDSREHEEP). Positions 109 to 129 (AKIERDSREHEEPTTSEMAEE) are disordered. Phosphoserine is present on S115. The Thyroglobulin type-1 domain occupies 188-262 (QGPCRRHMEA…MEYVDGDFQC (75 aa)). 3 cysteine pairs are disulfide-bonded: C191/C218, C229/C240, and C242/C262.

In terms of assembly, interacts with IGF1; this interaction enhances the growth stimulatory effects of IGF1 on fibroblasts. Interacts with CAV1; this interaction allows trafficking of IGFBP5 from the plasma membrane to the nucleus. Interacts with NCL; this interaction is necessary for IGFBP5 localization to the nucleus.

It localises to the secreted. Its subcellular location is the cytoplasm. The protein localises to the nucleus. In terms of biological role, multifunctional protein that plays a critical role in regulating the availability of IGFs to their receptors and thereby regulates IGF-mediated cellular processes including proliferation, differentiation, and apoptosis in a cell-type specific manner. Increases the cell proliferation of osteoblasts, intestinal smooth muscle cells and neuroblastoma cells. Enhances adhesion and survival of epithelial cells but decreases adhesion of mesenchymal cells. Once secreted, acts as a major mediator of mTORC1-dependent feedback inhibition of IGF1 signaling. Also plays a role in the induction of extracellular matrix (ECM) production and deposition independently of its nuclear translocation and binding to IGFs. Acts itself as a growth factor that can act independently of IGFs to regulate bone formation. Acts as a ligand for the ROR1 receptor which triggers formation of ROR1/HER2 heterodimer to enhance CREB oncogenic signaling. The sequence is that of Insulin-like growth factor-binding protein 5 (IGFBP5) from Sus scrofa (Pig).